We begin with the raw amino-acid sequence, 152 residues long: Small ribosomal subunit protein uS13 (152 aa).

Belongs to the universal ribosomal protein uS13 family. As to quaternary structure, component of the small ribosomal subunit.

It is found in the cytoplasm. Component of the small ribosomal subunit. The ribosome is a large ribonucleoprotein complex responsible for the synthesis of proteins in the cell. This chain is Small ribosomal subunit protein uS13 (rps18), found in Ictalurus punctatus (Channel catfish).